A 331-amino-acid chain; its full sequence is Phosphoribosylformylglycinamidine cyclo-ligase (331 aa).

It belongs to the AIR synthase family.

Its subcellular location is the cytoplasm. The enzyme catalyses 2-formamido-N(1)-(5-O-phospho-beta-D-ribosyl)acetamidine + ATP = 5-amino-1-(5-phospho-beta-D-ribosyl)imidazole + ADP + phosphate + H(+). It functions in the pathway purine metabolism; IMP biosynthesis via de novo pathway; 5-amino-1-(5-phospho-D-ribosyl)imidazole from N(2)-formyl-N(1)-(5-phospho-D-ribosyl)glycinamide: step 2/2. In Clostridium tetani (strain Massachusetts / E88), this protein is Phosphoribosylformylglycinamidine cyclo-ligase.